We begin with the raw amino-acid sequence, 96 residues long: Co-chaperonin GroES (96 aa).

Belongs to the GroES chaperonin family. Heptamer of 7 subunits arranged in a ring. Interacts with the chaperonin GroEL.

Its subcellular location is the cytoplasm. Its function is as follows. Together with the chaperonin GroEL, plays an essential role in assisting protein folding. The GroEL-GroES system forms a nano-cage that allows encapsulation of the non-native substrate proteins and provides a physical environment optimized to promote and accelerate protein folding. GroES binds to the apical surface of the GroEL ring, thereby capping the opening of the GroEL channel. This is Co-chaperonin GroES from Cupriavidus necator (strain ATCC 17699 / DSM 428 / KCTC 22496 / NCIMB 10442 / H16 / Stanier 337) (Ralstonia eutropha).